A 634-amino-acid polypeptide reads, in one-letter code: Acetylcholinesterase (634 aa).

Positions Met1 to Ala23 are cleaved as a signal peptide. Cys91 and Cys118 are oxidised to a cystine. 2 N-linked (GlcNAc...) asparagine glycosylation sites follow: Asn133 and Asn184. Ser225 functions as the Acyl-ester intermediate in the catalytic mechanism. A disulfide bridge links Cys279 with Cys290. Asn283 carries an N-linked (GlcNAc...) asparagine glycan. Catalysis depends on Glu352, which acts as the Charge relay system. The N-linked (GlcNAc...) asparagine glycan is linked to Asn368. A disulfide bond links Cys427 and Cys580. His495 (charge relay system) is an active-site residue. N-linked (GlcNAc...) asparagine glycans are attached at residues Asn512 and Asn592.

Belongs to the type-B carboxylesterase/lipase family. As to quaternary structure, dimers and collagen-tailed forms, in which catalytic tetramers are associated with anchoring proteins that attach them to the basal lamina or to cell membranes. In the collagen-tailed forms, subunits are associated with a specific collagen, COLQ, which triggers the formation of isoform T tetramers from dimers.

Its subcellular location is the synapse. It localises to the secreted. It is found in the cell membrane. It carries out the reaction acetylcholine + H2O = choline + acetate + H(+). In terms of biological role, terminates signal transduction at the neuromuscular junction by rapid hydrolysis of the acetylcholine released into the synaptic cleft. In Danio rerio (Zebrafish), this protein is Acetylcholinesterase (ache).